Reading from the N-terminus, the 131-residue chain is Profilin-2 (131 aa).

A disulfide bridge links cysteine 13 with cysteine 115. The short motif at 81–97 is the Involved in PIP2 interaction element; sequence AVIRGKKGAGGITIKKT. At threonine 111 the chain carries Phosphothreonine.

Belongs to the profilin family. Occurs in many kinds of cells as a complex with monomeric actin in a 1:1 ratio. In terms of processing, phosphorylated by MAP kinases.

The protein localises to the cytoplasm. It localises to the cytoskeleton. Binds to actin and affects the structure of the cytoskeleton. At high concentrations, profilin prevents the polymerization of actin, whereas it enhances it at low concentrations. By binding to PIP2, it inhibits the formation of IP3 and DG. The sequence is that of Profilin-2 (PRO2) from Phleum pratense (Common timothy).